Consider the following 416-residue polypeptide: Serine hydroxymethyltransferase (416 aa).

Residues L121 and 125–127 (GHL) each bind (6S)-5,6,7,8-tetrahydrofolate. An N6-(pyridoxal phosphate)lysine modification is found at K229.

The protein belongs to the SHMT family. In terms of assembly, homodimer. Pyridoxal 5'-phosphate is required as a cofactor.

It localises to the cytoplasm. The enzyme catalyses (6R)-5,10-methylene-5,6,7,8-tetrahydrofolate + glycine + H2O = (6S)-5,6,7,8-tetrahydrofolate + L-serine. The protein operates within one-carbon metabolism; tetrahydrofolate interconversion. It functions in the pathway amino-acid biosynthesis; glycine biosynthesis; glycine from L-serine: step 1/1. Its function is as follows. Catalyzes the reversible interconversion of serine and glycine with tetrahydrofolate (THF) serving as the one-carbon carrier. This reaction serves as the major source of one-carbon groups required for the biosynthesis of purines, thymidylate, methionine, and other important biomolecules. Also exhibits THF-independent aldolase activity toward beta-hydroxyamino acids, producing glycine and aldehydes, via a retro-aldol mechanism. The chain is Serine hydroxymethyltransferase from Neisseria meningitidis serogroup A / serotype 4A (strain DSM 15465 / Z2491).